Here is a 23-residue protein sequence, read N- to C-terminus: Superoxide dismutase [Mn], mitochondrial (23 aa).

It belongs to the iron/manganese superoxide dismutase family. In terms of assembly, homotetramer. Mn(2+) serves as cofactor.

Its subcellular location is the mitochondrion matrix. The catalysed reaction is 2 superoxide + 2 H(+) = H2O2 + O2. Its function is as follows. Destroys superoxide anion radicals which are normally produced within the cells and which are toxic to biological systems. This is Superoxide dismutase [Mn], mitochondrial from Aquarana catesbeiana (American bullfrog).